Reading from the N-terminus, the 1898-residue chain is Receptor-type tyrosine-protein phosphatase F (1898 aa).

A signal peptide spans 1-29 (MAPEPAPGRRMVPLVPALVMLGLMAGAHG). At 30–1254 (DSKPVFVKVP…QQQEEPEMLW (1225 aa)) the chain is on the extracellular side. Ig-like C2-type domains are found at residues 33 to 123 (PVFV…AKLS), 135 to 224 (PTID…ANLY), and 232 to 314 (PRFS…AQVT). A disulfide bridge links C54 with C107. 68-77 (KKGKKVSSQR) provides a ligand contact to heparin. Residue N117 is glycosylated (N-linked (GlcNAc...) asparagine). A disulfide bond links C156 and C207. 2 N-linked (GlcNAc...) asparagine glycosylation sites follow: N250 and N295. The cysteines at positions 253 and 298 are disulfide-linked. Fibronectin type-III domains are found at residues 321–411 (PPID…TGEQ), 416–510 (PPRR…TQQG), 514–604 (QPAD…TAQS), 609–706 (PPQK…TDED), 711–810 (PPRK…TTGA), 811–905 (VPGR…PEDA), 909–1001 (FPQN…TMPM), and 1005–1089 (FAKN…TAPD). The segment at 693-713 (GPESSPVLVRTDEDVPSGPPR) is disordered. The N-linked (GlcNAc...) asparagine glycan is linked to N721. 2 N-linked (GlcNAc...) asparagine glycosylation sites follow: N941 and N957. Residues 1255–1275 (VTGPVLAVILIILIVIAILLF) form a helical membrane-spanning segment. At 1276–1898 (KRKRTHSPSS…YLGSFDHYAT (623 aa)) the chain is on the cytoplasmic side. The residue at position 1296 (S1296) is a Phosphoserine. Tyrosine-protein phosphatase domains are found at residues 1343 to 1598 (FSQE…LLEA) and 1630 to 1889 (MELE…ALEY). Substrate is bound by residues D1507, 1539-1545 (CSAGVGR), and Q1583. The active-site Phosphocysteine intermediate is C1539. The Phosphocysteine intermediate role is filled by C1830.

The protein belongs to the protein-tyrosine phosphatase family. Receptor class 2A subfamily. In terms of assembly, interacts with GRIP1. Interacts with PPFIA1, PPFIA2 and PPFIA3. Interacts with PTPRF.

It localises to the membrane. It carries out the reaction O-phospho-L-tyrosyl-[protein] + H2O = L-tyrosyl-[protein] + phosphate. In terms of biological role, possible cell adhesion receptor. It possesses an intrinsic protein tyrosine phosphatase activity (PTPase) and dephosphorylates EPHA2 regulating its activity. The first PTPase domain has enzymatic activity, while the second one seems to affect the substrate specificity of the first one. The polypeptide is Receptor-type tyrosine-protein phosphatase F (Ptprf) (Rattus norvegicus (Rat)).